The chain runs to 156 residues: ATP synthase subunit b (156 aa).

A helical membrane pass occupies residues 7-26; sequence LIGQAIWFALFIWITMKYVW.

It belongs to the ATPase B chain family. As to quaternary structure, F-type ATPases have 2 components, F(1) - the catalytic core - and F(0) - the membrane proton channel. F(1) has five subunits: alpha(3), beta(3), gamma(1), delta(1), epsilon(1). F(0) has three main subunits: a(1), b(2) and c(10-14). The alpha and beta chains form an alternating ring which encloses part of the gamma chain. F(1) is attached to F(0) by a central stalk formed by the gamma and epsilon chains, while a peripheral stalk is formed by the delta and b chains.

The protein resides in the cell inner membrane. Functionally, f(1)F(0) ATP synthase produces ATP from ADP in the presence of a proton or sodium gradient. F-type ATPases consist of two structural domains, F(1) containing the extramembraneous catalytic core and F(0) containing the membrane proton channel, linked together by a central stalk and a peripheral stalk. During catalysis, ATP synthesis in the catalytic domain of F(1) is coupled via a rotary mechanism of the central stalk subunits to proton translocation. Its function is as follows. Component of the F(0) channel, it forms part of the peripheral stalk, linking F(1) to F(0). In Dechloromonas aromatica (strain RCB), this protein is ATP synthase subunit b.